The following is a 122-amino-acid chain: Putative iron-sulfur cluster insertion protein ErpA (122 aa).

Residues cysteine 50, cysteine 114, and cysteine 116 each coordinate iron-sulfur cluster.

The protein belongs to the HesB/IscA family. Homodimer. Iron-sulfur cluster serves as cofactor.

Required for insertion of 4Fe-4S clusters. This Bordetella petrii (strain ATCC BAA-461 / DSM 12804 / CCUG 43448) protein is Putative iron-sulfur cluster insertion protein ErpA.